The sequence spans 270 residues: Aliphatic sulfonates import ATP-binding protein SsuB 3 (270 aa).

The region spanning 17-238 (LAVQNLKKAF…ARGSHRLAAL (222 aa)) is the ABC transporter domain. Residue 49–56 (GRSGCGKS) coordinates ATP.

This sequence belongs to the ABC transporter superfamily. Aliphatic sulfonates importer (TC 3.A.1.17.2) family. The complex is composed of two ATP-binding proteins (SsuB), two transmembrane proteins (SsuC) and a solute-binding protein (SsuA).

Its subcellular location is the cell inner membrane. It carries out the reaction ATP + H2O + aliphatic sulfonate-[sulfonate-binding protein]Side 1 = ADP + phosphate + aliphatic sulfonateSide 2 + [sulfonate-binding protein]Side 1.. Its function is as follows. Part of the ABC transporter complex SsuABC involved in aliphatic sulfonates import. Responsible for energy coupling to the transport system. The protein is Aliphatic sulfonates import ATP-binding protein SsuB 3 of Pseudomonas syringae pv. tomato (strain ATCC BAA-871 / DC3000).